The chain runs to 1910 residues: Endoribonuclease dcr-1 (1910 aa).

One can recognise a Helicase ATP-binding domain in the interval 20-201 (LLDKATKKNT…KLMEQLKKLE (182 aa)). An ATP-binding site is contributed by 33-40 (LGTGSGKT). The short motif at 145 to 148 (DECH) is the DEAH box element. Residues 371–542 (EFQKERMKLE…TVNNPIEDDS (172 aa)) enclose the Helicase C-terminal domain. The region spanning 571 to 667 (AIALINRYCS…LPKGRESIAK (97 aa)) is the Dicer dsRNA-binding fold domain. The PAZ domain maps to 845-1003 (YVSEVVANME…LVPELMDIHP (159 aa)). 3 disordered regions span residues 951-988 (RIQN…VPHS), 1227-1248 (TASS…KQLT), and 1272-1309 (LEMS…PTNF). 2 stretches are compositionally biased toward polar residues: residues 970 to 988 (IPQA…VPHS) and 1227 to 1245 (TASS…SPPK). The stretch at 1245 to 1280 (KQLTKEEEQFKKLQNDLLKQAKERLEALEMSEDMEK) forms a coiled coil. The segment covering 1272 to 1286 (LEMSEDMEKPRRLED) has biased composition (basic and acidic residues). Acidic residues predominate over residues 1288 to 1304 (VNLEDYGDDQENQEDEN). RNase III domains lie at 1381–1589 (VSHI…LTLG) and 1643–1805 (FTQL…LDSG). Residues Glu-1682, Asp-1791, and Glu-1794 each coordinate Mg(2+). The region spanning 1833 to 1896 (SPIRELMEFE…AKRALKYLHQ (64 aa)) is the DRBM domain.

Belongs to the helicase family. Dicer subfamily. As to quaternary structure, component of the ERI/DICER complex at least composed of dcr-1, rrf-3 and eri-1. Interacts with pir-1. Mg(2+) is required as a cofactor. It depends on Mn(2+) as a cofactor.

Its function is as follows. Component of the ERI/DICER complex which is involved in processing amplified double-stranded RNA (dsRNA) intermediates during small-RNA-mediated gene-silencing or RNA interference (RNAi). Involved in cleaving dsRNA in the RNAi pathway. It produces 21 to 23 bp dsRNAs (siRNAs) which target the selective destruction of homologous RNAs. Seems to process the precursor of the small temporal RNA let-7 which is involved in developmental timing. Required for avoidance behavior induced by small RNAs derived from pathogenic bacteria such as P.aeruginosa. Involved in innate immunity through its role in small RNA processing. In terms of biological role, tDCR-1 acts as a deoxyribonuclease (DNase) initiating DNA fragmentation during apoptosis, upstream of nucleases cps-6, crn-2 and nuc-1. The sequence is that of Endoribonuclease dcr-1 from Caenorhabditis elegans.